Consider the following 583-residue polypeptide: Putative amidase C869.01 (583 aa).

An N-terminal signal peptide occupies residues 1–19 (MKLQLLFLTLAQLAKHGLA). Residues Lys141 and Ser222 each act as charge relay system in the active site. Ser246 serves as the catalytic Acyl-ester intermediate.

The protein belongs to the amidase family.

The protein resides in the cytoplasm. It catalyses the reaction a monocarboxylic acid amide + H2O = a monocarboxylate + NH4(+). This Schizosaccharomyces pombe (strain 972 / ATCC 24843) (Fission yeast) protein is Putative amidase C869.01.